A 59-amino-acid polypeptide reads, in one-letter code: Alpha-like toxin CsEv5 (59 aa).

The LCN-type CS-alpha/beta domain maps to 1-59 (KDGYPVDSKGCKLSCVANNYCDNQCKMKKASGGHCYAMSCYCEGLPENAKVSDSATNIC). 4 cysteine pairs are disulfide-bonded: cysteine 11/cysteine 59, cysteine 15/cysteine 35, cysteine 21/cysteine 40, and cysteine 25/cysteine 42.

This sequence belongs to the long (4 C-C) scorpion toxin superfamily. Sodium channel inhibitor family. In terms of tissue distribution, expressed by the venom gland.

The protein resides in the secreted. Its function is as follows. Binds voltage-independently sodium channels (Nav) and inhibits the inactivation of the activated channels, thereby blocking neuronal transmission. Is highly toxic to insects and barely toxic to mammals. As it does not compete with the classical alpha-toxin AaH2, this toxin is considered as an alpha-like toxin. In Centruroides sculpturatus (Arizona bark scorpion), this protein is Alpha-like toxin CsEv5.